A 632-amino-acid chain; its full sequence is Threonine--tRNA ligase (632 aa).

A TGS domain is found at 1–61; that stretch reads MPIITLPDGT…KTDANLAIIT (61 aa). A catalytic region spans residues 242–533; the sequence is DHRKIGKIQD…LIEHYEGAYP (292 aa). 3 residues coordinate Zn(2+): Cys333, His384, and His510.

This sequence belongs to the class-II aminoacyl-tRNA synthetase family. In terms of assembly, homodimer. Requires Zn(2+) as cofactor.

The protein localises to the cytoplasm. It carries out the reaction tRNA(Thr) + L-threonine + ATP = L-threonyl-tRNA(Thr) + AMP + diphosphate + H(+). Its function is as follows. Catalyzes the attachment of threonine to tRNA(Thr) in a two-step reaction: L-threonine is first activated by ATP to form Thr-AMP and then transferred to the acceptor end of tRNA(Thr). Also edits incorrectly charged L-seryl-tRNA(Thr). This Ruthia magnifica subsp. Calyptogena magnifica protein is Threonine--tRNA ligase.